Consider the following 95-residue polypeptide: Co-chaperonin GroES (95 aa).

Belongs to the GroES chaperonin family. In terms of assembly, heptamer of 7 subunits arranged in a ring. Interacts with the chaperonin GroEL.

Its subcellular location is the cytoplasm. In terms of biological role, together with the chaperonin GroEL, plays an essential role in assisting protein folding. The GroEL-GroES system forms a nano-cage that allows encapsulation of the non-native substrate proteins and provides a physical environment optimized to promote and accelerate protein folding. GroES binds to the apical surface of the GroEL ring, thereby capping the opening of the GroEL channel. In Streptococcus uberis (strain ATCC BAA-854 / 0140J), this protein is Co-chaperonin GroES.